The following is a 355-amino-acid chain: tRNA-specific 2-thiouridylase MnmA (355 aa).

Residues 8–15 (GMSGGVDS) and Met34 each bind ATP. Cys103 functions as the Nucleophile in the catalytic mechanism. A disulfide bridge links Cys103 with Cys199. Gly127 contributes to the ATP binding site. The interaction with tRNA stretch occupies residues 149-151 (KDQ). The Cysteine persulfide intermediate role is filled by Cys199. Residues 305 to 306 (RY) are interaction with tRNA.

This sequence belongs to the MnmA/TRMU family.

The protein resides in the cytoplasm. The catalysed reaction is S-sulfanyl-L-cysteinyl-[protein] + uridine(34) in tRNA + AH2 + ATP = 2-thiouridine(34) in tRNA + L-cysteinyl-[protein] + A + AMP + diphosphate + H(+). Functionally, catalyzes the 2-thiolation of uridine at the wobble position (U34) of tRNA, leading to the formation of s(2)U34. The polypeptide is tRNA-specific 2-thiouridylase MnmA (Clostridium acetobutylicum (strain ATCC 824 / DSM 792 / JCM 1419 / IAM 19013 / LMG 5710 / NBRC 13948 / NRRL B-527 / VKM B-1787 / 2291 / W)).